The sequence spans 293 residues: Diaminopimelate epimerase (293 aa).

Residues Asn-13, Gln-46, and Asn-66 each contribute to the substrate site. The Proton donor role is filled by Cys-75. Substrate-binding positions include 76 to 77 (GN), Asn-162, Asn-195, and 213 to 214 (ER). The active-site Proton acceptor is Cys-222. A substrate-binding site is contributed by 223–224 (GT).

This sequence belongs to the diaminopimelate epimerase family. In terms of assembly, homodimer.

The protein resides in the cytoplasm. It catalyses the reaction (2S,6S)-2,6-diaminopimelate = meso-2,6-diaminopimelate. It participates in amino-acid biosynthesis; L-lysine biosynthesis via DAP pathway; DL-2,6-diaminopimelate from LL-2,6-diaminopimelate: step 1/1. Catalyzes the stereoinversion of LL-2,6-diaminopimelate (L,L-DAP) to meso-diaminopimelate (meso-DAP), a precursor of L-lysine and an essential component of the bacterial peptidoglycan. This Psychrobacter sp. (strain PRwf-1) protein is Diaminopimelate epimerase.